The primary structure comprises 521 residues: Bacillolysin (521 aa).

The first 27 residues, 1 to 27 (MGLGKKLSVAVAASFMSLTISLPGVQA), serve as a signal peptide directing secretion. A propeptide spans 28–221 (AENPQLKENL…ILKKQNKVEH (194 aa)) (activation peptide). Positions 283 and 360 each coordinate Ca(2+). H364 is a binding site for Zn(2+). The active site involves E365. The Zn(2+) site is built by H368 and E388. Positions 399, 402, 404, 407, and 411 each coordinate Ca(2+). Catalysis depends on H449, which acts as the Proton donor.

This sequence belongs to the peptidase M4 family. Ca(2+) serves as cofactor. Zn(2+) is required as a cofactor.

Its subcellular location is the secreted. The catalysed reaction is Similar, but not identical, to that of thermolysin.. Its function is as follows. Extracellular zinc metalloprotease. This is Bacillolysin (npr) from Bacillus amyloliquefaciens (Bacillus velezensis).